A 1690-amino-acid polypeptide reads, in one-letter code: DNA-directed RNA polymerase subunit beta' (1690 aa).

Zn(2+) is bound by residues cysteine 63, cysteine 65, cysteine 78, and cysteine 81. Mg(2+) contacts are provided by aspartate 753, aspartate 755, and aspartate 757. Cysteine 1107, cysteine 1295, cysteine 1302, and cysteine 1305 together coordinate Zn(2+).

The protein belongs to the RNA polymerase beta' chain family. The RNAP catalytic core consists of 2 alpha, 1 beta, 1 beta' and 1 omega subunit. When a sigma factor is associated with the core the holoenzyme is formed, which can initiate transcription. Mg(2+) serves as cofactor. Requires Zn(2+) as cofactor.

The catalysed reaction is RNA(n) + a ribonucleoside 5'-triphosphate = RNA(n+1) + diphosphate. In terms of biological role, DNA-dependent RNA polymerase catalyzes the transcription of DNA into RNA using the four ribonucleoside triphosphates as substrates. This is DNA-directed RNA polymerase subunit beta' from Thermotoga maritima (strain ATCC 43589 / DSM 3109 / JCM 10099 / NBRC 100826 / MSB8).